We begin with the raw amino-acid sequence, 660 residues long: U-box domain-containing protein 13 (660 aa).

Positions 227–252 are disordered; the sequence is DDNGEEQKVGVNSRSNGQTSTAASQK. The segment covering 236–250 has biased composition (polar residues); the sequence is GVNSRSNGQTSTAAS. In terms of domain architecture, U-box spans 255–329; the sequence is VIPDDFRCPI…AQWCEANDIE (75 aa). 5 ARM repeats span residues 384 to 423, 425 to 464, 466 to 505, 507 to 546, and 548 to 587; these read ADNR…NLSI, ENNK…SLSV, DENK…NLCI, QGNK…ILSS, and PEGK…HLCS. Residues 631 to 660 are disordered; sequence AEQQKETAVSQPEEEAEPTHPESTTEAADT. The segment covering 651 to 660 has biased composition (polar residues); that stretch reads PESTTEAADT.

In terms of assembly, binds to SD11, SD16, SD17, SD18, SD113, SD129 and SD25. In terms of processing, phosphorylated by SD1-6 and SD1-7.

Its subcellular location is the nucleus. It is found in the cytoplasm. It carries out the reaction S-ubiquitinyl-[E2 ubiquitin-conjugating enzyme]-L-cysteine + [acceptor protein]-L-lysine = [E2 ubiquitin-conjugating enzyme]-L-cysteine + N(6)-ubiquitinyl-[acceptor protein]-L-lysine.. It participates in protein modification; protein ubiquitination. Functionally, functions as an E3 ubiquitin ligase. The polypeptide is U-box domain-containing protein 13 (PUB13) (Arabidopsis thaliana (Mouse-ear cress)).